The chain runs to 528 residues: GMP synthase [glutamine-hydrolyzing] (528 aa).

The 197-residue stretch at 3–199 (KVAIIDFGSQ…FLDIAGCQKD (197 aa)) folds into the Glutamine amidotransferase type-1 domain. Cys-83 (nucleophile) is an active-site residue. Active-site residues include His-174 and Glu-176. The GMPS ATP-PPase domain occupies 200–394 (WTVTSFIDDQ…LGISTEILMR (195 aa)). 227–233 (SGGVDSS) is an ATP binding site.

In terms of assembly, homodimer.

The enzyme catalyses XMP + L-glutamine + ATP + H2O = GMP + L-glutamate + AMP + diphosphate + 2 H(+). Its pathway is purine metabolism; GMP biosynthesis; GMP from XMP (L-Gln route): step 1/1. Its function is as follows. Catalyzes the synthesis of GMP from XMP. The sequence is that of GMP synthase [glutamine-hydrolyzing] from Ehrlichia ruminantium (strain Welgevonden).